A 354-amino-acid polypeptide reads, in one-letter code: Diaminopimelate epimerase, chloroplastic (354 aa).

The transit peptide at 1-44 directs the protein to the chloroplast; the sequence is MSSATAAATATIAAAAAKLAATPAPAPSRRRLTLRGNPTARRCV. Active-site residues include cysteine 142 and cysteine 297.

It belongs to the diaminopimelate epimerase family.

The protein localises to the plastid. Its subcellular location is the chloroplast. The catalysed reaction is (2S,6S)-2,6-diaminopimelate = meso-2,6-diaminopimelate. Its pathway is amino-acid biosynthesis; L-lysine biosynthesis via DAP pathway; DL-2,6-diaminopimelate from LL-2,6-diaminopimelate: step 1/1. This chain is Diaminopimelate epimerase, chloroplastic (DAPF), found in Oryza sativa subsp. japonica (Rice).